The primary structure comprises 238 residues: Peptidyl-tRNA hydrolase (238 aa).

Tyr-14 contributes to the tRNA binding site. His-19 acts as the Proton acceptor in catalysis. Residues Phe-64, Asn-66, and Asn-112 each coordinate tRNA. Residues 190–202 (KTEEPAPKPEKKT) are compositionally biased toward basic and acidic residues. Residues 190-225 (KTEEPAPKPEKKTVAKSHIHQARNHNQPRMPESGPM) form a disordered region. Basic residues predominate over residues 203-212 (VAKSHIHQAR).

It belongs to the PTH family. In terms of assembly, monomer.

The protein localises to the cytoplasm. The catalysed reaction is an N-acyl-L-alpha-aminoacyl-tRNA + H2O = an N-acyl-L-amino acid + a tRNA + H(+). Its function is as follows. Hydrolyzes ribosome-free peptidyl-tRNAs (with 1 or more amino acids incorporated), which drop off the ribosome during protein synthesis, or as a result of ribosome stalling. In terms of biological role, catalyzes the release of premature peptidyl moieties from peptidyl-tRNA molecules trapped in stalled 50S ribosomal subunits, and thus maintains levels of free tRNAs and 50S ribosomes. This Rhizobium rhizogenes (strain K84 / ATCC BAA-868) (Agrobacterium radiobacter) protein is Peptidyl-tRNA hydrolase.